A 70-amino-acid chain; its full sequence is Large ribosomal subunit protein eL24 (70 aa).

Cysteine 7, cysteine 10, cysteine 33, and cysteine 37 together coordinate Zn(2+). A C4-type zinc finger spans residues cysteine 7 to cysteine 37.

This sequence belongs to the eukaryotic ribosomal protein eL24 family. Part of the 50S ribosomal subunit. Forms a cluster with proteins L3 and L14. Zn(2+) serves as cofactor.

Binds to the 23S rRNA. This is Large ribosomal subunit protein eL24 from Methanocaldococcus jannaschii (strain ATCC 43067 / DSM 2661 / JAL-1 / JCM 10045 / NBRC 100440) (Methanococcus jannaschii).